A 232-amino-acid polypeptide reads, in one-letter code: MAVISMKQLLEAGVHFGHQTRRWNPKMAPYIFTDRNGIYIIDLQKTVKKVEECYDFVKQLAGEGGTLLFVGTKKQAQEAVKEEAERCGMFFVNQRWLGGMLTNFQTIRNRIDRLHELERMEEDGTFEVLPKKEVAQLLHEKEKLDKFLGGIKNMRRLPGALFVIDPRKERIAVAEARKLGIPIVAIVDTNCDPDEIDYVIPGNDDAIRAVKLLTGKIADAILEGKQGEQVAE.

Belongs to the universal ribosomal protein uS2 family.

The chain is Small ribosomal subunit protein uS2 from Desulforamulus reducens (strain ATCC BAA-1160 / DSM 100696 / MI-1) (Desulfotomaculum reducens).